Reading from the N-terminus, the 421-residue chain is Diaminobutyrate--2-oxoglutarate transaminase (421 aa).

Lysine 262 carries the post-translational modification N6-(pyridoxal phosphate)lysine.

It belongs to the class-III pyridoxal-phosphate-dependent aminotransferase family. Pyridoxal 5'-phosphate serves as cofactor.

It carries out the reaction L-2,4-diaminobutanoate + 2-oxoglutarate = L-aspartate 4-semialdehyde + L-glutamate. It functions in the pathway amine and polyamine biosynthesis; ectoine biosynthesis; L-ectoine from L-aspartate 4-semialdehyde: step 1/3. Catalyzes reversively the conversion of L-aspartate beta-semialdehyde (ASA) to L-2,4-diaminobutyrate (DABA) by transamination with L-glutamate. The protein is Diaminobutyrate--2-oxoglutarate transaminase (ectB) of Vibrio parahaemolyticus serotype O3:K6 (strain RIMD 2210633).